The chain runs to 65 residues: MPKMKTHSGAKKRFKLTGSGKVKRQQANRRHYLEHKSSRLTRRLAGDQIVSTPGEAKAIKRMLGK.

A disordered region spans residues 1–29 (MPKMKTHSGAKKRFKLTGSGKVKRQQANR).

Belongs to the bacterial ribosomal protein bL35 family.

The polypeptide is Large ribosomal subunit protein bL35 (Kocuria rhizophila (strain ATCC 9341 / DSM 348 / NBRC 103217 / DC2201)).